The primary structure comprises 537 residues: Probable quinate permease (537 aa).

At 1–22 the chain is on the cytoplasmic side; it reads MSILSLVEDRPTPKEVYNWKIY. A helical membrane pass occupies residues 23–43; sequence LLAAVASCTSCMIGYDSAFIG. At 44–74 the chain is on the extracellular side; that stretch reads TTISLQSFKDEFDWDSMSAAHQDLVSSNIVS. A helical transmembrane segment spans residues 75 to 95; the sequence is LYQAGAFFGAFFAYPIGHFWG. Over 96 to 97 the chain is Cytoplasmic; it reads RK. The chain crosses the membrane as a helical span at residues 98–118; sequence WGLMVSALIFTLGAGIMLGTN. At 119–130 the chain is on the extracellular side; it reads GDRGFGLLYGGR. Residues 131–151 form a helical membrane-spanning segment; the sequence is VLAGLGVGAGSNITPIYISEL. Residues 152 to 159 are Cytoplasmic-facing; sequence SPPAIRGR. The helical transmembrane segment at 160 to 180 threads the bilayer; it reads LVGVYELGWQIGGLVGFWICY. The Extracellular segment spans residues 181–193; sequence GVDETLPPSHKQW. Residues 194–214 traverse the membrane as a helical segment; sequence IIPFAVQLIPSGLLIIGALFL. Topologically, residues 215-285 are cytoplasmic; the sequence is KESPRWLFLR…AWTNKKILYR (71 aa). Residues 286–306 traverse the membrane as a helical segment; the sequence is LFLGSMLFFWQNGSGINAINY. Residues 307-325 are Extracellular-facing; that stretch reads YSPTVFKSIGVTGSNTSLF. A helical membrane pass occupies residues 326 to 346; it reads TTGIFGVVKTVVTFIWLLWLI. The Cytoplasmic portion of the chain corresponds to 347-352; it reads DRVGRR. Residues 353-373 form a helical membrane-spanning segment; the sequence is LLLLIGAAGGSICLWIVGAYI. Residues 374–387 are Extracellular-facing; the sequence is KIARPSERENKQMD. The helical transmembrane segment at 388–408 threads the bilayer; sequence GGGIAAMFFFYLWTVFYTPSW. Over 409 to 456 the chain is Cytoplasmic; that stretch reads NGTPWVINSEMFDPNIRSLAQACAAGSNWLWNFLISRFTPQMFAKMDY. Residues 457-477 form a helical membrane-spanning segment; sequence GVYFFFASLMILSIIFVFFLI. Residues 478–537 lie on the Extracellular side of the membrane; that stretch reads PETKGIPLESMDRLFETQPIWRAHGTLLKQIREDEERFRHDLEDSGFVKSTDRQVEVVDA.

The protein belongs to the major facilitator superfamily. Sugar transporter (TC 2.A.1.1) family. In terms of assembly, interacts with creB. Post-translationally, ubiquitinated. Deubiquitinated by creB, probably to control its activity or amount.

The protein localises to the cell membrane. Integral membrane transporter that imports quinic acid to be catabolized as a carbon source. The sequence is that of Probable quinate permease (qutD) from Aspergillus flavus (strain ATCC 200026 / FGSC A1120 / IAM 13836 / NRRL 3357 / JCM 12722 / SRRC 167).